The following is a 2179-amino-acid chain: Voltage-dependent L-type calcium channel subunit alpha-1D (2179 aa).

Disordered regions lie at residues 1–21 (MMMM…EDHA), 30–49 (TRLP…SKQT), and 64–100 (KAAQ…SSNS). Residues 1-126 (MMMMMMMKKM…RACISIVEWK (126 aa)) are Cytoplasmic-facing. Over residues 38 to 49 (GPTSQPNSSKQT) the composition is skewed to polar residues. The segment covering 82–93 (QRKRQQYAKSKK) has biased composition (basic residues). The I repeat unit spans residues 113 to 409 (NPIRRACISI…LVLGVLSGEF (297 aa)). The helical transmembrane segment at 127 to 145 (PFDIFILLAIFANCVALAI) threads the bilayer. The Extracellular segment spans residues 146 to 163 (YIPFPEDDSNSTNHNLEK). Residues 164–183 (VEYAFLIIFTVETFLKIIAY) form a helical membrane-spanning segment. The Cytoplasmic portion of the chain corresponds to 184–195 (GLLLHPNAYVRN). Residues 196–214 (GWNLLDFVIVIVGLFSVIL) traverse the membrane as a helical segment. The Extracellular segment spans residues 215–235 (EQLTKETEGGNHSSGKSGGFD). A helical transmembrane segment spans residues 236 to 254 (VKALRAFRVLRPLRLVSGV). At 255-273 (PSLQVVLNSIIKAMVPLLH) the chain is on the cytoplasmic side. The helical transmembrane segment at 274–293 (IALLVLFVIIIYAIIGLELF) threads the bilayer. The Extracellular segment spans residues 294 to 381 (IGKMHKTCFF…WVNDAIGWEW (88 aa)). Glutamate 364 lines the Ca(2+) pocket. A helical membrane pass occupies residues 382–406 (PWVYFVSLIILGSFFVLNLVLGVLS). Topologically, residues 407–543 (GEFSKEREKA…RRCRAAVKSV (137 aa)) are cytoplasmic. Residues 429 to 446 (QQLEEDLKGYLDWITQAE) form a binding to the beta subunit region. The tract at residues 449–480 (DPENEEEGGEEGKRNTSMPTSETESVNTENVS) is disordered. Positions 463–479 (NTSMPTSETESVNTENV) are enriched in polar residues. The stretch at 529-775 (NRFNRRRCRA…VFLAIAVDNL (247 aa)) is one II repeat. Residues 544–563 (TFYWLVIVLVFLNTLTISSE) form a helical membrane-spanning segment. Topologically, residues 564–578 (HYNQPDWLTQIQDIA) are extracellular. A helical membrane pass occupies residues 579–597 (NKVLLALFTCEMLVKMYSL). At 598–605 (GLQAYFVS) the chain is on the cytoplasmic side. Residues 606 to 624 (LFNRFDCFVVCGGITETIL) form a helical membrane-spanning segment. Over 625 to 634 (VELELMSPLG) the chain is Extracellular. A helical transmembrane segment spans residues 635-653 (VSVFRCVRLLRIFKVTRHW). Over 654–672 (TSLSNLVASLLNSMKSIAS) the chain is Cytoplasmic. Residues 673 to 693 (LLLLLFLFIIIFSLLGMQLFG) traverse the membrane as a helical segment. Over 694-747 (GKFNFDETQTKRSTFDNFPQALLTVFQILTGEDWNAVMYDGIMAYGGPSSSGMI) the chain is Extracellular. Glutamate 725 is a binding site for Ca(2+). Residues 748–772 (VCIYFIILFICGNYILLNVFLAIAV) form a helical membrane-spanning segment. Residues 771–810 (AVDNLADAESLNTAQKEEAEEKERKKIARKESLENKKNNK) are a coiled coil. The Cytoplasmic segment spans residues 773-906 (DNLADAESLN…VGCHKLINHH (134 aa)). The segment covering 786-810 (KEEAEEKERKKIARKESLENKKNNK) has biased composition (basic and acidic residues). Residues 786–870 (KEEAEEKERK…AGPRPRRISE (85 aa)) form a disordered region. The span at 811 to 822 (PEVNQIANSDNK) shows a compositional bias: polar residues. Over residues 845–858 (VGEEEEEEEEDEPE) the composition is skewed to acidic residues. An III repeat occupies 893–1175 (NPIRVGCHKL…IFVGFVIVTF (283 aa)). The helical transmembrane segment at 907–925 (IFTNLILVFIMLSSAALAA) threads the bilayer. Over 926-941 (EDPIRSHSFRNTILGY) the chain is Extracellular. A helical membrane pass occupies residues 942 to 961 (FDYAFTAIFTVEILLKMTTF). The Cytoplasmic segment spans residues 962 to 973 (GAFLHKGAFCRN). The chain crosses the membrane as a helical span at residues 974–992 (YFNLLDMLVVGVSLVSFGI). Over 993 to 998 (QSSAIS) the chain is Extracellular. A helical transmembrane segment spans residues 999–1018 (VVKILRVLRVLRPLRAINRA). Over 1019-1037 (KGLKHVVQCVFVAIRTIGN) the chain is Cytoplasmic. Residues 1038-1057 (IMIVTTLLQFMFACIGVQLF) form a helical membrane-spanning segment. The Extracellular portion of the chain corresponds to 1058–1147 (KGKFYRCTDE…VGPVYNYRVE (90 aa)). A dihydropyridine binding region spans residues 1095 to 1185 (RIWQNSDFNF…QEQGEKEYKN (91 aa)). A Ca(2+)-binding site is contributed by glutamate 1121. A helical transmembrane segment spans residues 1148–1168 (ISIFFIIYIIIVAFFMMNIFV). Over 1169–1225 (GFVIVTFQEQGEKEYKNCELDKNQRQCVEYALKARPLRRYIPKNPYQYKFWYVVNSS) the chain is Cytoplasmic. An IV repeat occupies 1212 to 1487 (NPYQYKFWYV…LFVAVIMDNF (276 aa)). The helical transmembrane segment at 1226–1244 (PFEYMMFVLIMLNTLCLAM) threads the bilayer. Residues 1245 to 1259 (QHYEQSKMFNDAMDI) are Extracellular-facing. A helical membrane pass occupies residues 1260-1279 (LNMVFTGVFTVEMVLKVIAF). At 1280–1286 (KPKGYFS) the chain is on the cytoplasmic side. A helical transmembrane segment spans residues 1287–1308 (DAWNTFDSLIVIGSIIDVALSE). Residues 1309–1333 (ADPSESETIPLPTATPGNSEESNRI) are Extracellular-facing. Residues 1334–1353 (SITFFRLFRVMRLVKLLSRG) form a helical membrane-spanning segment. At 1354–1372 (EGIRTLLWTFIKSFQALPY) the chain is on the cytoplasmic side. The helical transmembrane segment at 1373 to 1392 (VALLIAMLFFIYAVIGMQMF) threads the bilayer. The Extracellular portion of the chain corresponds to 1393–1459 (GKVAMRDNNQ…GEEYTCGSNF (67 aa)). The interval 1440 to 1506 (LCDPDSDYNP…LGPHHLDEFK (67 aa)) is dihydropyridine binding. Positions 1452-1495 (EYTCGSNFAIVYFISFYMLCAFLIINLFVAVIMDNFDYLTRDWS) are phenylalkylamine binding. The helical transmembrane segment at 1460-1484 (AIVYFISFYMLCAFLIINLFVAVIM) threads the bilayer. The Cytoplasmic segment spans residues 1485 to 2179 (DNFDYLTRDW…ADEMICITTL (695 aa)). 3 disordered regions span residues 1704–1789 (LLGN…AHGK), 1896–1941 (FERP…RSSF), and 2135–2171 (GDMG…DLAD). Polar residues predominate over residues 1764 to 1782 (SIGKQAPTSTNANLNNANM). Residues 2156-2171 (SDEEPDPGREEEDLAD) are compositionally biased toward acidic residues.

The protein belongs to the calcium channel alpha-1 subunit (TC 1.A.1.11) family. CACNA1D subfamily. In terms of assembly, voltage-dependent calcium channels are multisubunit complexes, consisting of alpha-1, alpha-2, beta and delta subunits in a 1:1:1:1 ratio. The channel activity is directed by the pore-forming and voltage-sensitive alpha-1 subunit. In many cases, this subunit is sufficient to generate voltage-sensitive calcium channel activity. The auxiliary subunits beta and alpha-2/delta linked by a disulfide bridge regulate the channel activity. Interacts (via IQ domain) with CABP1 and CABP4 in a calcium independent manner. Interacts with RIMBP2. Expressed in the inner hair cells (IHC) of the cochlea.

It localises to the membrane. It carries out the reaction Ca(2+)(in) = Ca(2+)(out). In terms of biological role, voltage-sensitive calcium channels (VSCC) mediate the entry of calcium ions into excitable cells and are also involved in a variety of calcium-dependent processes, including muscle contraction, hormone or neurotransmitter release, gene expression, cell motility, cell division and cell death. The isoform alpha-1D gives rise to L-type calcium currents. Long-lasting (L-type) calcium channels belong to the 'high-voltage activated' (HVA) group. They are blocked by dihydropyridines (DHP), phenylalkylamines, and by benzothiazepines. This chain is Voltage-dependent L-type calcium channel subunit alpha-1D (Cacna1d), found in Mus musculus (Mouse).